Reading from the N-terminus, the 326-residue chain is Tetraketide alpha-pyrone reductase 1 (326 aa).

NADP(+)-binding positions include 8-32, Lys-44, and Tyr-162; that span reads VCVTGASGFLASWLVKRLLLEGYEV.

This sequence belongs to the NAD(P)-dependent epimerase/dehydratase family. Dihydroflavonol-4-reductase subfamily. As to quaternary structure, interacts with 4CLL1/ACOS5, PKSA and PKSB. In terms of tissue distribution, specifically expressed in anther tapetal cells during microspores development.

It localises to the cytoplasm. The protein resides in the nucleus. Its subcellular location is the endoplasmic reticulum. Functionally, involved in the biosynthesis of hydroxylated tetraketide compounds that serve as sporopollenin precursors (the main constituents of exine). Is essential for pollen wall development. Acts on tetraketide alpha-pyrones and reduces the carbonyl function on the tetraketide alkyl chain to a secondary alcohol function. The sequence is that of Tetraketide alpha-pyrone reductase 1 (TKPR1) from Arabidopsis thaliana (Mouse-ear cress).